A 517-amino-acid chain; its full sequence is MADPPHFSLFQQKFRTGDKPFLTLDADFLMNHTKVLLKSDASDKVWKVKLDGGRLSEGWEEFACDQKFRDGDVLVFKHHGDEVFHVAVVSPSVSGDIRNASSSQVITEDTYIDVDDVDDDDYGQDDEDDDDDDDEGEDNIENISEKTDKRQEADSSSDHSGFITARVTRYSLLHDRLDLSRNFTLLFGGHQKTCEIDVVDEQGRRWTMKLAKNISSGVFYIRLGWGNFCCANGLTQGDLCKFKLFQNEERPVLWLCPQESGNGRKEKRTFDEVSKGKEKKTPSPFLIVKYTPSRETTGQLSLPVSFTRNNSINKTGEVILLNQDGRKWSSYLQITGLGRGAGSEWFYLRRGWREMCEANGVGVNDSFKLELVWEGANPMFKFCSKIENHEYKGKGNQRTRKKRACETAPQPRNVKKTPRLGVEGPVYQVDEERGHTQVSNRTNTISGNLQRLLPPSCSVSDQVANVKQGIVDSLNTVRQCRTELETSEQNLQASLLAIDALGERIWGISKILSSNLV.

The segment at residues 7–92 (FSLFQQKFRT…VFHVAVVSPS (86 aa)) is a DNA-binding region (TF-B3 1). The segment covering 115–140 (DDVDDDDYGQDDEDDDDDDDEGEDNI) has biased composition (acidic residues). Residues 115–158 (DDVDDDDYGQDDEDDDDDDDEGEDNIENISEKTDKRQEADSSSD) form a disordered region. Residues 143–157 (ISEKTDKRQEADSSS) are compositionally biased toward basic and acidic residues. DNA-binding regions (TF-B3) lie at residues 162 to 259 (FITA…CPQE) and 285 to 385 (FLIV…FCSK). A disordered region spans residues 393 to 415 (GKGNQRTRKKRACETAPQPRNVK).

In terms of tissue distribution, expressed in the shoot apical meristem (SAM), in the inflorescence apex and flowers.

Its subcellular location is the nucleus. May play a role in flower development. The protein is B3 domain-containing protein REM1 (REM1) of Arabidopsis thaliana (Mouse-ear cress).